The sequence spans 199 residues: Pectinesterase inhibitor 4 (199 aa).

An N-terminal signal peptide occupies residues 1–25 (MLRFVVLSLTLMVFINSSNFPKTAA). Residues Asn16, Asn33, Asn43, and Asn83 are each glycosylated (N-linked (GlcNAc...) asparagine). A disulfide bridge links Cys42 with Cys51. Cys109 and Cys158 are oxidised to a cystine.

The protein belongs to the PMEI family. As to quaternary structure, binds reversibly to PME3 to inhibit its activity; the stability of the PME3-PMEI4 complex and the inhibition of the pectin methylesterase (PME) activity is pH-dependent, based on protonation status of amino-acids at the complex interface. In terms of tissue distribution, expressed in outer cell layer of roots, particularly in the root-hair zone. Expressed in roots and siliques.

The protein resides in the secreted. It localises to the extracellular space. It is found in the apoplast. Pectin methylesterase (PME) inhibitor that can target the root-expressed PME17 and PME3 in a pH-dependent manner, mainly in slightly acidic conditions (pH 6.3 and 5.0) but not at pH 7.5; this processus relies on changes in the protonation of amino acids involved in intermolecular and intramolecular interactions. Regulate de-methylesterification of pectins in roots and affects root growth. This Arabidopsis thaliana (Mouse-ear cress) protein is Pectinesterase inhibitor 4.